Consider the following 101-residue polypeptide: DNA-directed RNA polymerase subunit omega (101 aa).

Low complexity predominate over residues 1–13 (MSSTPAAASATPS). The disordered stretch occupies residues 1-22 (MSSTPAAASATPSHGALPAYDT).

It belongs to the RNA polymerase subunit omega family. The RNAP catalytic core consists of 2 alpha, 1 beta, 1 beta' and 1 omega subunit. When a sigma factor is associated with the core the holoenzyme is formed, which can initiate transcription.

The enzyme catalyses RNA(n) + a ribonucleoside 5'-triphosphate = RNA(n+1) + diphosphate. Functionally, promotes RNA polymerase assembly. Latches the N- and C-terminal regions of the beta' subunit thereby facilitating its interaction with the beta and alpha subunits. The polypeptide is DNA-directed RNA polymerase subunit omega (Rhodococcus jostii (strain RHA1)).